An 88-amino-acid polypeptide reads, in one-letter code: Stannin (88 aa).

At 1 to 10 the chain is on the mitochondrial intermembrane side; sequence MSIMDHSPTT. A helical membrane pass occupies residues 11 to 31; it reads GVVTVIVILIAIAALGALILG. Over 32-88 the chain is Cytoplasmic; that stretch reads CWCYLRLQRISQSEDEESIVGDGETKEPFLLVQYSAKGPCVERKAKLMTPNGPEVHG. The residue at position 49 (serine 49) is a Phosphoserine.

This sequence belongs to the stannin family. Monomer.

The protein localises to the mitochondrion outer membrane. Its function is as follows. Plays a role in the toxic effects of organotins. Plays a role in endosomal maturation. This chain is Stannin (SNN), found in Homo sapiens (Human).